Here is a 63-residue protein sequence, read N- to C-terminus: Large ribosomal subunit protein bL32 (63 aa).

The protein belongs to the bacterial ribosomal protein bL32 family.

In Aquifex aeolicus (strain VF5), this protein is Large ribosomal subunit protein bL32 (rpmF).